Consider the following 108-residue polypeptide: Insertion element IS629 uncharacterized 12 kDa protein S4062 (108 aa).

The protein belongs to the transposase 8 family.

The protein is Insertion element IS629 uncharacterized 12 kDa protein S4062 of Shigella flexneri.